A 500-amino-acid polypeptide reads, in one-letter code: L-arabinose isomerase (500 aa).

4 residues coordinate Mn(2+): E306, E333, H350, and H450.

It belongs to the arabinose isomerase family. In terms of assembly, homohexamer. Mn(2+) is required as a cofactor.

The catalysed reaction is beta-L-arabinopyranose = L-ribulose. It participates in carbohydrate degradation; L-arabinose degradation via L-ribulose; D-xylulose 5-phosphate from L-arabinose (bacterial route): step 1/3. Functionally, catalyzes the conversion of L-arabinose to L-ribulose. The chain is L-arabinose isomerase from Escherichia coli (strain 55989 / EAEC).